The following is a 740-amino-acid chain: Eukaryotic translation initiation factor 3 subunit B (740 aa).

Residues 1-10 are compositionally biased toward polar residues; that stretch reads MAPSFDTLSE. A disordered region spans residues 1–20; that stretch reads MAPSFDTLSEQDLHEEEEEE. The 87-residue stretch at 40–126 folds into the RRM domain; it reads TFVVIDGLPV…HTLLVNKLMD (87 aa). WD repeat units follow at residues 193–230, 232–289, 302–343, 455–496, 513–556, and 571–609; these read AHWT…KQKQ, PHPF…RSFV, EPKK…LLGK, SLKD…SFFA, IEKK…EKPE, and IEHY…HTFA. The disordered stretch occupies residues 695 to 721; the sequence is DAYGLPEEADDPKLAKDAAATTQEQGE.

Belongs to the eIF-3 subunit B family. In terms of assembly, component of the eukaryotic translation initiation factor 3 (eIF-3) complex.

It localises to the cytoplasm. Its function is as follows. RNA-binding component of the eukaryotic translation initiation factor 3 (eIF-3) complex, which is involved in protein synthesis of a specialized repertoire of mRNAs and, together with other initiation factors, stimulates binding of mRNA and methionyl-tRNAi to the 40S ribosome. The eIF-3 complex specifically targets and initiates translation of a subset of mRNAs involved in cell proliferation. The polypeptide is Eukaryotic translation initiation factor 3 subunit B (prt1) (Neosartorya fischeri (strain ATCC 1020 / DSM 3700 / CBS 544.65 / FGSC A1164 / JCM 1740 / NRRL 181 / WB 181) (Aspergillus fischerianus)).